The primary structure comprises 225 residues: NAD(P)H-quinone oxidoreductase subunit K, chloroplastic (225 aa).

The [4Fe-4S] cluster site is built by cysteine 43, cysteine 44, cysteine 108, and cysteine 139.

The protein belongs to the complex I 20 kDa subunit family. NDH is composed of at least 16 different subunits, 5 of which are encoded in the nucleus. It depends on [4Fe-4S] cluster as a cofactor.

Its subcellular location is the plastid. It localises to the chloroplast thylakoid membrane. The enzyme catalyses a plastoquinone + NADH + (n+1) H(+)(in) = a plastoquinol + NAD(+) + n H(+)(out). It carries out the reaction a plastoquinone + NADPH + (n+1) H(+)(in) = a plastoquinol + NADP(+) + n H(+)(out). Its function is as follows. NDH shuttles electrons from NAD(P)H:plastoquinone, via FMN and iron-sulfur (Fe-S) centers, to quinones in the photosynthetic chain and possibly in a chloroplast respiratory chain. The immediate electron acceptor for the enzyme in this species is believed to be plastoquinone. Couples the redox reaction to proton translocation, and thus conserves the redox energy in a proton gradient. The polypeptide is NAD(P)H-quinone oxidoreductase subunit K, chloroplastic (Solanum bulbocastanum (Wild potato)).